Reading from the N-terminus, the 485-residue chain is Pentatricopeptide repeat-containing protein At1g62720 (485 aa).

12 PPR repeats span residues 68–102 (SIVD…GIGH), 103–137 (DLYS…GYEP), 138–172 (DVVT…GFRP), 173–207 (DVVI…GVRA), 208–242 (DAVT…DIVP), 243–277 (NVIT…CVDP), 278–312 (DVFT…GCLP), 313–347 (DVVT…GLVG), 348–378 (DTIT…MDSR), 380–414 (NIRT…EIEL), 415–449 (DITT…GLKP), and 450–484 (DVVS…GLLP).

The protein belongs to the PPR family. P subfamily.

This chain is Pentatricopeptide repeat-containing protein At1g62720, found in Arabidopsis thaliana (Mouse-ear cress).